The sequence spans 816 residues: Phosphatidylinositol 4-kinase beta (816 aa).

3 disordered regions span residues 1–30 (MGDMVVEPATLKPTSEPTPSPSGNNGGSLL), 101–120 (EDEMGAGVASGTAKGARRRR), and 250–318 (RKRE…SFSS). Position 2 is an N-acetylglycine (G2). The interaction with ACBD3 stretch occupies residues 2–68 (GDMVVEPATL…VKLLHGGVAI (67 aa)). Over residues 10–30 (TLKPTSEPTPSPSGNNGGSLL) the composition is skewed to low complexity. A PIK helical domain is found at 52–242 (CQEVLEKVKL…GTKLRKLILS (191 aa)). The residue at position 258 (S258) is a Phosphoserine. T263 carries the post-translational modification Phosphothreonine. Phosphoserine is present on residues S266, S275, S277, S284, and S294. Polar residues-rich tracts occupy residues 278-297 (DATASISLSSNLKRTASNPK) and 306-318 (SSSTESIDNSFSS). Residue S428 is modified to Phosphoserine. At T438 the chain carries Phosphothreonine. At S511 the chain carries Phosphoserine. Residues T517 and T519 each carry the phosphothreonine modification. One can recognise a PI3K/PI4K catalytic domain in the interval 535 to 801 (EPWQEKVRRI…MVDGSMRSIT (267 aa)). The tract at residues 541–547 (VRRIREG) is G-loop. Residues 668–676 (QVKDRHNGN) form a catalytic loop region. The segment at 687–711 (HIDFGFILSSSPRNLGFETSAFKLT) is activation loop.

It belongs to the PI3/PI4-kinase family. Type III PI4K subfamily. In terms of assembly, interacts with ARF1 and ARF3 in the Golgi complex, but not with ARF4, ARF5 or ARF6. Interacts with NCS1/FREQ in a calcium-independent manner. Interacts with CALN1/CABP8 and CALN2/CABP7; in a calcium-dependent manner; this interaction competes with NCS1/FREQ binding. Interacts with ACBD3. Interacts with ARMH3, YWHAB, YWHAE, YWHAG, YWHAH, YWHAQ, YWHAZ and SFN. Interacts with GGA2 (via VHS domain); the interaction is important for PI4KB location at the Golgi apparatus membrane. Interacts with ATG9A. Mg(2+) is required as a cofactor. The cofactor is Mn(2+).

It is found in the endomembrane system. Its subcellular location is the mitochondrion outer membrane. The protein resides in the rough endoplasmic reticulum membrane. The protein localises to the golgi apparatus. It localises to the golgi apparatus membrane. It catalyses the reaction a 1,2-diacyl-sn-glycero-3-phospho-(1D-myo-inositol) + ATP = a 1,2-diacyl-sn-glycero-3-phospho-(1D-myo-inositol 4-phosphate) + ADP + H(+). With respect to regulation, inhibited by wortmannin. Increased kinase activity upon interaction with NCS1/FREQ. Its function is as follows. Phosphorylates phosphatidylinositol (PI) in the first committed step in the production of the second messenger inositol-1,4,5,-trisphosphate (PIP). May regulate Golgi disintegration/reorganization during mitosis, possibly via its phosphorylation. Involved in Golgi-to-plasma membrane trafficking. May play an important role in the inner ear development. The sequence is that of Phosphatidylinositol 4-kinase beta (Pi4kb) from Mus musculus (Mouse).